An 84-amino-acid polypeptide reads, in one-letter code: UPF0291 protein SMU_447 (84 aa).

Residues 57 to 84 (EGNDITPAKLKEIQRQKGIHGRKPEDNS) are disordered.

Belongs to the UPF0291 family.

The protein resides in the cytoplasm. This Streptococcus mutans serotype c (strain ATCC 700610 / UA159) protein is UPF0291 protein SMU_447.